A 621-amino-acid polypeptide reads, in one-letter code: Interleukin-1 receptor-associated kinase-like 2 (621 aa).

The Death domain occupies 13-94 (LDDLCRNMDT…RAAQIILNWK (82 aa)). Positions 113-175 (GKPLAASVRN…TASADSKDFS (63 aa)) are disordered. A compositionally biased stretch (polar residues) spans 157–169 (ASSSLKTNQTASA). Residues 206-476 (FNPSHKISEG…AEALVMAACL (271 aa)) form the Protein kinase domain. ATP is bound by residues 212–220 (ISEGTFADV), Lys-233, and 333–336 (KSSN). The segment covering 503–522 (ETSLPCSGLSEGTGSSFNTP) has biased composition (polar residues). Residues 503 to 534 (ETSLPCSGLSEGTGSSFNTPEETDDVDNSSFD) are disordered.

The protein belongs to the protein kinase superfamily. TKL Ser/Thr protein kinase family. Pelle subfamily. Interacts with MYD88. IL-1 stimulation leads to the formation of a signaling complex which dissociates from the IL-1 receptor following the binding of PELI1.

In terms of biological role, binds to the IL-1 type I receptor following IL-1 engagement, triggering intracellular signaling cascades leading to transcriptional up-regulation and mRNA stabilization. This Bos taurus (Bovine) protein is Interleukin-1 receptor-associated kinase-like 2 (IRAK2).